The sequence spans 276 residues: Putative pyruvate, phosphate dikinase regulatory protein 1 (276 aa).

Residue 157–164 (GVSRTSKT) participates in ADP binding.

The protein belongs to the pyruvate, phosphate/water dikinase regulatory protein family. PDRP subfamily.

It carries out the reaction N(tele)-phospho-L-histidyl/L-threonyl-[pyruvate, phosphate dikinase] + ADP = N(tele)-phospho-L-histidyl/O-phospho-L-threonyl-[pyruvate, phosphate dikinase] + AMP + H(+). The enzyme catalyses N(tele)-phospho-L-histidyl/O-phospho-L-threonyl-[pyruvate, phosphate dikinase] + phosphate + H(+) = N(tele)-phospho-L-histidyl/L-threonyl-[pyruvate, phosphate dikinase] + diphosphate. In terms of biological role, bifunctional serine/threonine kinase and phosphorylase involved in the regulation of the pyruvate, phosphate dikinase (PPDK) by catalyzing its phosphorylation/dephosphorylation. This is Putative pyruvate, phosphate dikinase regulatory protein 1 from Staphylococcus haemolyticus (strain JCSC1435).